The chain runs to 677 residues: MTQVAKKILVTCALPYANGSIHLGHMLEHIQADVWVRYQRMRGHEVNFICADDAHGTPIMLKAQQLGITPEQMIGEMSQEHQTDFAGFNISYDNYHSTHSDENRELSELIYTRLKENGFIKNRTISQLYDPEKGMFLPDRFVKGTCPKCKSADQYGDNCEVCGATYSPTELIEPKSVVSGATPVMRDSEHFFFDLPSFSEMLQAWTRSGALQEQVANKMQEWFESGLQQWDISRDAPYFGFEIPNAPGKYFYVWLDAPIGYMGSFKNLCDKRGDTTSFDEYWKKDSDAELYHFIGKDIVYFHSLFWPAMLEGSHFRKPTNLFVHGYVTVNGAKMSKSRGTFIKASTWLKHFDADSLRYYYTAKLSSRIDDIDLNLEDFVQRVNADIVNKVVNLASRNAGFINKRFDGVLAAELADPQLYKTFTDAAAVIGEAWESREFGKAIREIMALADVANRYVDEQAPWVVAKQEGRDADLQAICSMGINLFRVLMTYLKPVLPTLSERVEAFLNSELNWDAIEQPLLGHKVNTFKALYNRIDMKQVEALVEASKEEVKAAAAPVTGPLADFPIQETITFDDFAKIDLRVALIENAEFVEGSDKLLRLTLDLGGEKRNVFSGIRSAYPDPQALIGRQTVMVANLAPRKMRFGVSEGMVMAAGPGGKDIFLLSPDDGAKPGQQVK.

The 'HIGH' region signature appears at 15-25; sequence PYANGSIHLGH. The Zn(2+) site is built by C146, C149, C159, and C162. Positions 333–337 match the 'KMSKS' region motif; the sequence is KMSKS. K336 is a binding site for ATP. The 103-residue stretch at 575-677 folds into the tRNA-binding domain; it reads DFAKIDLRVA…DGAKPGQQVK (103 aa).

Belongs to the class-I aminoacyl-tRNA synthetase family. MetG type 1 subfamily. In terms of assembly, homodimer. It depends on Zn(2+) as a cofactor.

Its subcellular location is the cytoplasm. The enzyme catalyses tRNA(Met) + L-methionine + ATP = L-methionyl-tRNA(Met) + AMP + diphosphate. Its function is as follows. Is required not only for elongation of protein synthesis but also for the initiation of all mRNA translation through initiator tRNA(fMet) aminoacylation. The polypeptide is Methionine--tRNA ligase (Salmonella paratyphi A (strain AKU_12601)).